The chain runs to 304 residues: Quinolinate synthase (304 aa).

Iminosuccinate-binding residues include His-23 and Ser-40. Cys-86 contacts [4Fe-4S] cluster. Iminosuccinate contacts are provided by residues 112-114 (YVN) and Ser-129. Residue Cys-173 participates in [4Fe-4S] cluster binding. Residues 199-201 (HPE) and Thr-216 contribute to the iminosuccinate site. Cys-260 serves as a coordination point for [4Fe-4S] cluster.

Belongs to the quinolinate synthase family. Type 2 subfamily. [4Fe-4S] cluster is required as a cofactor.

Its subcellular location is the cytoplasm. It carries out the reaction iminosuccinate + dihydroxyacetone phosphate = quinolinate + phosphate + 2 H2O + H(+). The protein operates within cofactor biosynthesis; NAD(+) biosynthesis; quinolinate from iminoaspartate: step 1/1. Its function is as follows. Catalyzes the condensation of iminoaspartate with dihydroxyacetone phosphate to form quinolinate. The protein is Quinolinate synthase of Methanothermobacter thermautotrophicus (strain ATCC 29096 / DSM 1053 / JCM 10044 / NBRC 100330 / Delta H) (Methanobacterium thermoautotrophicum).